We begin with the raw amino-acid sequence, 210 residues long: Small ribosomal subunit protein eS8y (210 aa).

Residues 1–22 are disordered; it reads MGISRDSIHKRRATGGKQKMWR. The segment covering 8–22 has biased composition (basic residues); sequence IHKRRATGGKQKMWR.

This sequence belongs to the eukaryotic ribosomal protein eS8 family.

The sequence is that of Small ribosomal subunit protein eS8y (RPS8B) from Arabidopsis thaliana (Mouse-ear cress).